The chain runs to 488 residues: Probable glycine dehydrogenase (decarboxylating) subunit 2 (488 aa).

The residue at position 274 (Lys274) is an N6-(pyridoxal phosphate)lysine.

Belongs to the GcvP family. C-terminal subunit subfamily. In terms of assembly, the glycine cleavage system is composed of four proteins: P, T, L and H. In this organism, the P 'protein' is a heterodimer of two subunits. Pyridoxal 5'-phosphate is required as a cofactor.

It carries out the reaction N(6)-[(R)-lipoyl]-L-lysyl-[glycine-cleavage complex H protein] + glycine + H(+) = N(6)-[(R)-S(8)-aminomethyldihydrolipoyl]-L-lysyl-[glycine-cleavage complex H protein] + CO2. Its function is as follows. The glycine cleavage system catalyzes the degradation of glycine. The P protein binds the alpha-amino group of glycine through its pyridoxal phosphate cofactor; CO(2) is released and the remaining methylamine moiety is then transferred to the lipoamide cofactor of the H protein. The sequence is that of Probable glycine dehydrogenase (decarboxylating) subunit 2 from Listeria monocytogenes serotype 4b (strain F2365).